A 477-amino-acid polypeptide reads, in one-letter code: Bifunctional protein HldE (477 aa).

Residues 1 to 318 (MKVTLPEFER…ENAVRGRAET (318 aa)) form a ribokinase region. Lysine 179 carries the post-translational modification N6-acetyllysine. 195-198 (NLSE) is an ATP binding site. The active site involves aspartate 264. The tract at residues 344–477 (MTNGVFDILH…IKKIQQDKKG (134 aa)) is cytidylyltransferase.

In the N-terminal section; belongs to the carbohydrate kinase PfkB family. The protein in the C-terminal section; belongs to the cytidylyltransferase family. As to quaternary structure, homodimer.

The catalysed reaction is D-glycero-beta-D-manno-heptose 7-phosphate + ATP = D-glycero-beta-D-manno-heptose 1,7-bisphosphate + ADP + H(+). It carries out the reaction D-glycero-beta-D-manno-heptose 1-phosphate + ATP + H(+) = ADP-D-glycero-beta-D-manno-heptose + diphosphate. It functions in the pathway nucleotide-sugar biosynthesis; ADP-L-glycero-beta-D-manno-heptose biosynthesis; ADP-L-glycero-beta-D-manno-heptose from D-glycero-beta-D-manno-heptose 7-phosphate: step 1/4. Its pathway is nucleotide-sugar biosynthesis; ADP-L-glycero-beta-D-manno-heptose biosynthesis; ADP-L-glycero-beta-D-manno-heptose from D-glycero-beta-D-manno-heptose 7-phosphate: step 3/4. Functionally, catalyzes the phosphorylation of D-glycero-D-manno-heptose 7-phosphate at the C-1 position to selectively form D-glycero-beta-D-manno-heptose-1,7-bisphosphate. In terms of biological role, catalyzes the ADP transfer from ATP to D-glycero-beta-D-manno-heptose 1-phosphate, yielding ADP-D-glycero-beta-D-manno-heptose. The chain is Bifunctional protein HldE from Shigella dysenteriae serotype 1 (strain Sd197).